Consider the following 86-residue polypeptide: Alpha-toxin TbTx5 (86 aa).

An N-terminal signal peptide occupies residues 1 to 19 (MNDFVFLVVACLLTAGTEG). The LCN-type CS-alpha/beta domain occupies 21–82 (KDGYPVEGDN…EPTKTNGRCK (62 aa)). Cystine bridges form between Cys-31–Cys-81, Cys-35–Cys-57, Cys-43–Cys-64, and Cys-47–Cys-66. A Proline amide modification is found at Pro-83.

Belongs to the long (4 C-C) scorpion toxin superfamily. Sodium channel inhibitor family. Alpha subfamily. As to expression, expressed by the venom gland.

Its subcellular location is the secreted. In terms of biological role, alpha toxins bind voltage-independently at site-3 of sodium channels (Nav) and inhibit the inactivation of the activated channels, thereby blocking neuronal transmission. The protein is Alpha-toxin TbTx5 of Tityus bahiensis (Brazilian scorpion).